A 120-amino-acid polypeptide reads, in one-letter code: Large ribosomal subunit protein uL18 (120 aa).

This sequence belongs to the universal ribosomal protein uL18 family. In terms of assembly, part of the 50S ribosomal subunit; part of the 5S rRNA/L5/L18/L25 subcomplex. Contacts the 5S and 23S rRNAs.

Functionally, this is one of the proteins that bind and probably mediate the attachment of the 5S RNA into the large ribosomal subunit, where it forms part of the central protuberance. In Chloroherpeton thalassium (strain ATCC 35110 / GB-78), this protein is Large ribosomal subunit protein uL18.